Here is a 250-residue protein sequence, read N- to C-terminus: NAD(P)H-quinone oxidoreductase subunit S, chloroplastic (250 aa).

The N-terminal 48 residues, Met-1 to Lys-48, are a transit peptide targeting the chloroplast. Lys-52 is covalently cross-linked (Glycyl lysine isopeptide (Lys-Gly) (interchain with G-Cter in ubiquitin)). Composition is skewed to basic and acidic residues over residues Gln-76–Glu-94 and Val-106–Met-115. 2 disordered regions span residues Gln-76–Ala-163 and Arg-222–Pro-250. Pro residues predominate over residues Asn-136–Ala-146.

As to quaternary structure, part of the chloroplast NDH complex, composed of a mixture of chloroplast and nucleus encoded subunits. Component of the electron donor-binding subcomplex, at least composed of NDHS, NDHT and NDHU. Interacts with the NDH subcomplex A via the protein NDHT and NDHU. In terms of processing, arg-193 is the critical site for the high affinity binding of NDH to ferredoxin.

It is found in the plastid. The protein resides in the chloroplast thylakoid membrane. It catalyses the reaction a plastoquinone + NADH + (n+1) H(+)(in) = a plastoquinol + NAD(+) + n H(+)(out). The enzyme catalyses a plastoquinone + NADPH + (n+1) H(+)(in) = a plastoquinol + NADP(+) + n H(+)(out). Its function is as follows. NDH shuttles electrons from NAD(P)H:plastoquinone, via FMN and iron-sulfur (Fe-S) centers, to quinones in the photosynthetic chain and possibly in a chloroplast respiratory chain. The immediate electron acceptor for the enzyme in this species is believed to be plastoquinone. Couples the redox reaction to proton translocation, and thus conserves the redox energy in a proton gradient. Required for the efficient operation of ferredoxin-dependent plastoquinone reduction. Forms the electron donor-binding subcomplex in association with the NDHT and NDHU subunits. The chain is NAD(P)H-quinone oxidoreductase subunit S, chloroplastic from Arabidopsis thaliana (Mouse-ear cress).